We begin with the raw amino-acid sequence, 154 residues long: Catabolic 3-dehydroquinase (154 aa).

Tyr-25 functions as the Proton acceptor in the catalytic mechanism. 3 residues coordinate substrate: Asn-79, His-85, and Asp-92. The active-site Proton donor is the His-105. Substrate-binding positions include 106–107 (IS) and Arg-116.

Belongs to the type-II 3-dehydroquinase family. Homododecamer. Adopts a ring-like structure, composed of an arrangement of two hexameric rings stacked on top of one another.

It carries out the reaction 3-dehydroquinate = 3-dehydroshikimate + H2O. It functions in the pathway aromatic compound metabolism; 3,4-dihydroxybenzoate biosynthesis; 3,4-dihydroxybenzoate from 3-dehydroquinate: step 1/2. Is involved in the catabolism of quinate. Allows the utilization of quinate as carbon source via the beta-ketoadipate pathway. This chain is Catabolic 3-dehydroquinase, found in Botryotinia fuckeliana (strain B05.10) (Noble rot fungus).